Here is a 225-residue protein sequence, read N- to C-terminus: 3-dehydroquinate dehydratase (225 aa).

3-dehydroquinate contacts are provided by residues serine 6, 30–32, and arginine 62; that span reads EWR. Histidine 118 acts as the Proton donor/acceptor in catalysis. The active-site Schiff-base intermediate with substrate is lysine 143. 3-dehydroquinate-binding residues include arginine 186, serine 205, and glutamine 209.

Belongs to the type-I 3-dehydroquinase family. As to quaternary structure, homodimer.

The enzyme catalyses 3-dehydroquinate = 3-dehydroshikimate + H2O. It functions in the pathway metabolic intermediate biosynthesis; chorismate biosynthesis; chorismate from D-erythrose 4-phosphate and phosphoenolpyruvate: step 3/7. Involved in the third step of the chorismate pathway, which leads to the biosynthesis of aromatic amino acids. Catalyzes the cis-dehydration of 3-dehydroquinate (DHQ) and introduces the first double bond of the aromatic ring to yield 3-dehydroshikimate. In Streptococcus pneumoniae (strain Taiwan19F-14), this protein is 3-dehydroquinate dehydratase.